Here is a 311-residue protein sequence, read N- to C-terminus: 4-hydroxy-tetrahydrodipicolinate synthase (311 aa).

Threonine 49 contacts pyruvate. The Proton donor/acceptor role is filled by tyrosine 138. The Schiff-base intermediate with substrate role is filled by lysine 166. Valine 207 provides a ligand contact to pyruvate.

The protein belongs to the DapA family. In terms of assembly, homotetramer; dimer of dimers.

The protein resides in the cytoplasm. It catalyses the reaction L-aspartate 4-semialdehyde + pyruvate = (2S,4S)-4-hydroxy-2,3,4,5-tetrahydrodipicolinate + H2O + H(+). It participates in amino-acid biosynthesis; L-lysine biosynthesis via DAP pathway; (S)-tetrahydrodipicolinate from L-aspartate: step 3/4. Catalyzes the condensation of (S)-aspartate-beta-semialdehyde [(S)-ASA] and pyruvate to 4-hydroxy-tetrahydrodipicolinate (HTPA). In Lactobacillus helveticus (strain DPC 4571), this protein is 4-hydroxy-tetrahydrodipicolinate synthase.